We begin with the raw amino-acid sequence, 304 residues long: UDP-3-O-acyl-N-acetylglucosamine deacetylase (304 aa).

The Zn(2+) site is built by His-79, His-238, and Asp-242. Catalysis depends on His-265, which acts as the Proton donor.

This sequence belongs to the LpxC family. Zn(2+) is required as a cofactor.

The catalysed reaction is a UDP-3-O-[(3R)-3-hydroxyacyl]-N-acetyl-alpha-D-glucosamine + H2O = a UDP-3-O-[(3R)-3-hydroxyacyl]-alpha-D-glucosamine + acetate. It participates in glycolipid biosynthesis; lipid IV(A) biosynthesis; lipid IV(A) from (3R)-3-hydroxytetradecanoyl-[acyl-carrier-protein] and UDP-N-acetyl-alpha-D-glucosamine: step 2/6. Its function is as follows. Catalyzes the hydrolysis of UDP-3-O-myristoyl-N-acetylglucosamine to form UDP-3-O-myristoylglucosamine and acetate, the committed step in lipid A biosynthesis. The polypeptide is UDP-3-O-acyl-N-acetylglucosamine deacetylase (Pseudoalteromonas atlantica (strain T6c / ATCC BAA-1087)).